The sequence spans 718 residues: 1-deoxy-D-xylulose-5-phosphate synthase 1, chloroplastic (718 aa).

Residues Met1–Tyr55 constitute a chloroplast transit peptide. Thiamine diphosphate contacts are provided by residues His143 and Gly184–Ser186. Asp215 lines the Mg(2+) pocket. Thiamine diphosphate-binding positions include Gly216 to Ala217, Asn244, Tyr365, and Glu447. Asn244 is a Mg(2+) binding site.

Belongs to the transketolase family. DXPS subfamily. Homodimer. Requires Mg(2+) as cofactor. The cofactor is thiamine diphosphate. In terms of tissue distribution, expressed in trichomes, leaves, flowers, roots and stems.

The protein resides in the plastid. The protein localises to the chloroplast. It catalyses the reaction D-glyceraldehyde 3-phosphate + pyruvate + H(+) = 1-deoxy-D-xylulose 5-phosphate + CO2. The protein operates within metabolic intermediate biosynthesis; 1-deoxy-D-xylulose 5-phosphate biosynthesis; 1-deoxy-D-xylulose 5-phosphate from D-glyceraldehyde 3-phosphate and pyruvate: step 1/1. Functionally, catalyzes the acyloin condensation reaction between C atoms 2 and 3 of pyruvate and glyceraldehyde 3-phosphate to yield 1-deoxy-D-xylulose-5-phosphate (DXP). This chain is 1-deoxy-D-xylulose-5-phosphate synthase 1, chloroplastic, found in Cannabis sativa (Hemp).